The primary structure comprises 427 residues: Cysteate synthase (427 aa).

Lys-104 bears the N6-(pyridoxal phosphate)lysine mark. Asn-130 and Thr-382 together coordinate pyridoxal 5'-phosphate.

The protein belongs to the threonine synthase family. Cysteate synthase subfamily. In terms of assembly, homotrimer. Pyridoxal 5'-phosphate serves as cofactor.

It carries out the reaction O-phospho-L-serine + sulfite + H(+) = L-cysteate + phosphate. It functions in the pathway cofactor biosynthesis; coenzyme M biosynthesis. Specifically catalyzes the beta-elimination of phosphate from L-phosphoserine and the beta-addition of sulfite to the dehydroalanine intermediate to produce L-cysteate. This chain is Cysteate synthase, found in Methanocella paludicola (strain DSM 17711 / JCM 13418 / NBRC 101707 / SANAE).